The primary structure comprises 483 residues: Probable 4-hydroxyphenylacetate 3-monooxygenase (483 aa).

Substrate contacts are provided by residues 104-108 (RSPDY) and histidine 150. Residues 150–152 (HTF), 156–159 (QVNR), and threonine 193 each bind FAD. Residue 206 to 207 (AP) participates in substrate binding. 452–455 (DPIR) serves as a coordination point for FAD.

The protein belongs to the FADH(2)-utilizing monooxygenase family.

It carries out the reaction 4-hydroxyphenylacetate + FADH2 + O2 = 3,4-dihydroxyphenylacetate + FAD + H2O + H(+). It participates in aromatic compound metabolism; 4-hydroxyphenylacetate degradation; pyruvate and succinate semialdehyde from 4-hydroxyphenylacetate: step 1/7. Its function is as follows. Catalyzes the hydroxylation of 4-hydroxyphenylacetic acid (4HPA), leading to the production of 3,4-dihydroxyphenylacetic acid (DHPA). The chain is Probable 4-hydroxyphenylacetate 3-monooxygenase (yoaI) from Bacillus subtilis (strain 168).